The sequence spans 663 residues: Transmembrane 9 superfamily member 2 (663 aa).

The first 28 residues, 1 to 28, serve as a signal peptide directing secretion; sequence MSSRPPASLPARGPRLLLLSLLLLGTVP. Topologically, residues 29 to 300 are lumenal; that stretch reads GPRPGSAFYL…LESMPHTHIQ (272 aa). A helical transmembrane segment spans residues 301-321; it reads WFSIMNSLVIVLFLSGMVAMI. The Cytoplasmic segment spans residues 322–374; that stretch reads MLRTLHKDIARYNQMDSTEDAQEEFGWKLVHGDIFRPPRKGMLLSVFLGSGTQ. Residues 375–395 form a helical membrane-spanning segment; it reads ILIMTFVTLFFACLGFLSPAN. The Lumenal segment spans residues 396 to 398; it reads RGA. The helical transmembrane segment at 399–419 threads the bilayer; sequence LMTCAVVLWVLLGTPAGYVAA. Residues 420 to 437 lie on the Cytoplasmic side of the membrane; it reads RFYKSFGGEKWKTNVLLT. A helical transmembrane segment spans residues 438-458; sequence SFLCPGIVFADFFIMNLILWG. Residues 459–466 lie on the Lumenal side of the membrane; sequence EGSSAAIP. The helical transmembrane segment at 467-487 threads the bilayer; that stretch reads FGTLVAILALWFCISVPLTFI. Residues 488-522 are Cytoplasmic-facing; sequence GAYFGFKKNAIEHPVRTNQIPRQIPEQSFYTKPLP. The helical transmembrane segment at 523–543 threads the bilayer; sequence GIIMGGILPFGCIFIQLFFIL. The Lumenal segment spans residues 544 to 554; that stretch reads NSIWSHQMYYM. A helical transmembrane segment spans residues 555–575; it reads FGFLFLVFIILVITCSEATIL. Topologically, residues 576–591 are cytoplasmic; sequence LCYFHLCAEDYHWQWR. The helical transmembrane segment at 592–612 threads the bilayer; the sequence is SFLTSGFTAVYFLVYAIHYFF. At 613 to 631 the chain is on the lumenal side; the sequence is SKLQITGTASTILYFGYTM. Residues 632–652 form a helical membrane-spanning segment; sequence IMVLIFFLFTGTIGFFACFWF. At 653–663 the chain is on the cytoplasmic side; that stretch reads VTKIYSVVKVD.

It belongs to the nonaspanin (TM9SF) (TC 9.A.2) family.

It localises to the endosome membrane. It is found in the golgi outpost. Its subcellular location is the cytoplasm. The protein localises to the cytoskeleton. The protein resides in the microtubule organizing center. In terms of biological role, in the intracellular compartments, may function as a channel or small molecule transporter. This chain is Transmembrane 9 superfamily member 2 (Tm9sf2), found in Rattus norvegicus (Rat).